The primary structure comprises 358 residues: ATP-dependent (S)-NAD(P)H-hydrate dehydratase (358 aa).

Residues 63-354 (LLQSAKNVIP…QQIHQAFEEL (292 aa)) enclose the YjeF C-terminal domain. (6S)-NADPHX is bound by residues glycine 163 and 220 to 226 (NVVEFDR). Residues 261–265 (KGQHD) and 280–289 (GSNRRCGGQG) each bind ATP. (6S)-NADPHX is bound at residue aspartate 290.

Belongs to the NnrD/CARKD family. Mg(2+) is required as a cofactor.

It catalyses the reaction (6S)-NADHX + ATP = ADP + phosphate + NADH + H(+). It carries out the reaction (6S)-NADPHX + ATP = ADP + phosphate + NADPH + H(+). Functionally, catalyzes the dehydration of the S-form of NAD(P)HX at the expense of ATP, which is converted to ADP. Together with NAD(P)HX epimerase, which catalyzes the epimerization of the S- and R-forms, the enzyme allows the repair of both epimers of NAD(P)HX, a damaged form of NAD(P)H that is a result of enzymatic or heat-dependent hydration. The polypeptide is ATP-dependent (S)-NAD(P)H-hydrate dehydratase (Nematostella vectensis (Starlet sea anemone)).